The sequence spans 290 residues: Probable aquaporin PIP2-1 (290 aa).

The next 2 membrane-spanning stretches (helical) occupy residues 43–63 and 80–100; these read AVIA…ATVI and CGGV…FILV. The NPA 1 motif lies at 112–114; that stretch reads NPA. Helical transmembrane passes span 131–151, 173–193, and 207–227; these read ILYI…VKAF, GTGL…VFSA, and VLAP…TIPI. Positions 233-235 match the NPA 2 motif; the sequence is NPA. A helical transmembrane segment spans residues 255 to 275; the sequence is IFWVGPFVGAAIAAFYHQYIL.

The protein belongs to the MIP/aquaporin (TC 1.A.8) family. PIP (TC 1.A.8.11) subfamily. As to expression, expressed in roots, leaves and anthers.

It is found in the cell membrane. Its function is as follows. Aquaporins facilitate the transport of water and small neutral solutes across cell membranes. In Oryza sativa subsp. japonica (Rice), this protein is Probable aquaporin PIP2-1 (PIP2-1).